The primary structure comprises 357 residues: MLVLGIETTCDETAAAVVERLPDGSARILSNIVRSQTEEHAPYGGVVPEIAARAHVELLDGLIARAMTESGVGFRQLSGVAAAAGPGLIGGVIVGLTTAKAIALVHGTPLTAVNHLEAHALTPRLTSRLEFPYCLFLASGGHTQIVAVLGVGNYVRLGTTVDDAMGEAFDKVAKMLGLPYPGGPEVERAAASGDATRFNFPRPMLGRPDANFSLSGLKTAVRNEAARIDPLEPRDISDLCAGFQAAVLEATADRLGVGLRLFEERFGRPRALVAAGGVAANQAIRASLEGVAAKARTSLIIPPPALCTDNGAMIAWAGAERLAAGLTDSLETPPRARWLLDANAQAPAGFANTRAGF.

Fe cation is bound by residues His-115 and His-119. Substrate contacts are provided by residues 137–141 (LASGG), Asp-170, Gly-183, and Asn-281. Asp-309 contributes to the Fe cation binding site.

It belongs to the KAE1 / TsaD family. Fe(2+) serves as cofactor.

It is found in the cytoplasm. It carries out the reaction L-threonylcarbamoyladenylate + adenosine(37) in tRNA = N(6)-L-threonylcarbamoyladenosine(37) in tRNA + AMP + H(+). Required for the formation of a threonylcarbamoyl group on adenosine at position 37 (t(6)A37) in tRNAs that read codons beginning with adenine. Is involved in the transfer of the threonylcarbamoyl moiety of threonylcarbamoyl-AMP (TC-AMP) to the N6 group of A37, together with TsaE and TsaB. TsaD likely plays a direct catalytic role in this reaction. In Nitrobacter winogradskyi (strain ATCC 25391 / DSM 10237 / CIP 104748 / NCIMB 11846 / Nb-255), this protein is tRNA N6-adenosine threonylcarbamoyltransferase.